A 354-amino-acid polypeptide reads, in one-letter code: Peptide chain release factor 1 (354 aa).

Glutamine 231 is modified (N5-methylglutamine). Basic and acidic residues predominate over residues 284-304 (EALAKDRKEQVGSGDRSERIR). The interval 284-308 (EALAKDRKEQVGSGDRSERIRTYNF) is disordered.

Belongs to the prokaryotic/mitochondrial release factor family. Methylated by PrmC. Methylation increases the termination efficiency of RF1.

Its subcellular location is the cytoplasm. Peptide chain release factor 1 directs the termination of translation in response to the peptide chain termination codons UAG and UAA. This is Peptide chain release factor 1 from Nitratiruptor sp. (strain SB155-2).